We begin with the raw amino-acid sequence, 302 residues long: tRNA pseudouridine synthase B (302 aa).

The active-site Nucleophile is D45.

The protein belongs to the pseudouridine synthase TruB family. Type 1 subfamily.

The catalysed reaction is uridine(55) in tRNA = pseudouridine(55) in tRNA. Responsible for synthesis of pseudouridine from uracil-55 in the psi GC loop of transfer RNAs. The sequence is that of tRNA pseudouridine synthase B from Francisella tularensis subsp. holarctica (strain FTNF002-00 / FTA).